A 393-amino-acid polypeptide reads, in one-letter code: NAD(P)H-quinone oxidoreductase subunit H, chloroplastic (393 aa).

It belongs to the complex I 49 kDa subunit family. As to quaternary structure, NDH is composed of at least 16 different subunits, 5 of which are encoded in the nucleus.

It is found in the plastid. Its subcellular location is the chloroplast thylakoid membrane. The enzyme catalyses a plastoquinone + NADH + (n+1) H(+)(in) = a plastoquinol + NAD(+) + n H(+)(out). The catalysed reaction is a plastoquinone + NADPH + (n+1) H(+)(in) = a plastoquinol + NADP(+) + n H(+)(out). Functionally, NDH shuttles electrons from NAD(P)H:plastoquinone, via FMN and iron-sulfur (Fe-S) centers, to quinones in the photosynthetic chain and possibly in a chloroplast respiratory chain. The immediate electron acceptor for the enzyme in this species is believed to be plastoquinone. Couples the redox reaction to proton translocation, and thus conserves the redox energy in a proton gradient. This chain is NAD(P)H-quinone oxidoreductase subunit H, chloroplastic, found in Sorghum bicolor (Sorghum).